The following is a 714-amino-acid chain: Protein ESC8 (714 aa).

2 disordered regions span residues 598–674 (APTG…ELHN) and 694–714 (RQLQ…RKGL). Over residues 610 to 624 (TSSQRRTTVHYSSDV) the composition is skewed to polar residues. Positions 628–650 (VSEESENEVDIDVSDDYDSEYLS) are enriched in acidic residues. Residues 654–674 (TLTRKGEDRTDKSFGKRELHN) show a composition bias toward basic and acidic residues. Over residues 704 to 714 (RSLRRNARKGL) the composition is skewed to basic residues.

In terms of assembly, interacts with GAL11 and SIR2.

It localises to the cytoplasm. It is found in the nucleus. Its function is as follows. Involved in HMR and telomere silencing via the recruitment or stabilizing of the SIR (silent information regulators) complex. In Saccharomyces cerevisiae (strain ATCC 204508 / S288c) (Baker's yeast), this protein is Protein ESC8 (ESC8).